Here is a 403-residue protein sequence, read N- to C-terminus: S-adenosylmethionine synthase (403 aa).

H15 provides a ligand contact to ATP. Residue D17 coordinates Mg(2+). E43 serves as a coordination point for K(+). L-methionine is bound by residues E56 and Q99. Residues 99-109 (QSPDINQGVDR) form a flexible loop region. ATP contacts are provided by residues 166-168 (DAK), 232-233 (KF), D241, 247-248 (RK), A264, and K268. Position 241 (D241) interacts with L-methionine. Residue K272 coordinates L-methionine.

The protein belongs to the AdoMet synthase family. As to quaternary structure, homotetramer; dimer of dimers. Requires Mg(2+) as cofactor. K(+) serves as cofactor.

It is found in the cytoplasm. The enzyme catalyses L-methionine + ATP + H2O = S-adenosyl-L-methionine + phosphate + diphosphate. The protein operates within amino-acid biosynthesis; S-adenosyl-L-methionine biosynthesis; S-adenosyl-L-methionine from L-methionine: step 1/1. Functionally, catalyzes the formation of S-adenosylmethionine (AdoMet) from methionine and ATP. The overall synthetic reaction is composed of two sequential steps, AdoMet formation and the subsequent tripolyphosphate hydrolysis which occurs prior to release of AdoMet from the enzyme. In Xanthomonas axonopodis pv. citri (strain 306), this protein is S-adenosylmethionine synthase.